Reading from the N-terminus, the 372-residue chain is Aryl-hydrocarbon-interacting protein-like 1 (372 aa).

Residues 53–145 (RQVDQPMHII…DLDELQKEPQ (93 aa)) enclose the PPIase FKBP-type domain. TPR repeat units follow at residues 178-211 (VPVL…LRNL), 230-263 (NTLT…HPGI), and 264-297 (VKAY…EPSM). Residues 315–372 (KQEEERLRCRNMLSQGATQPPTEPPAEPHTAPPAELSTGPPAEPPAELPLSPGHSLQH) form a disordered region. Positions 335 to 345 (PTEPPAEPHTA) are enriched in pro residues.

In terms of assembly, interacts with NUB1.

It is found in the cytoplasm. It localises to the nucleus. In terms of biological role, may be important in protein trafficking and/or protein folding and stabilization. This chain is Aryl-hydrocarbon-interacting protein-like 1 (AIPL1), found in Papio cynocephalus (Yellow baboon).